Consider the following 344-residue polypeptide: UDP-3-O-acylglucosamine N-acyltransferase (344 aa).

His248 acts as the Proton acceptor in catalysis.

Belongs to the transferase hexapeptide repeat family. LpxD subfamily. Homotrimer.

The enzyme catalyses a UDP-3-O-[(3R)-3-hydroxyacyl]-alpha-D-glucosamine + a (3R)-hydroxyacyl-[ACP] = a UDP-2-N,3-O-bis[(3R)-3-hydroxyacyl]-alpha-D-glucosamine + holo-[ACP] + H(+). Its pathway is bacterial outer membrane biogenesis; LPS lipid A biosynthesis. Its function is as follows. Catalyzes the N-acylation of UDP-3-O-acylglucosamine using 3-hydroxyacyl-ACP as the acyl donor. Is involved in the biosynthesis of lipid A, a phosphorylated glycolipid that anchors the lipopolysaccharide to the outer membrane of the cell. The protein is UDP-3-O-acylglucosamine N-acyltransferase of Prochlorococcus marinus (strain MIT 9515).